Consider the following 257-residue polypeptide: Exosome complex component Rrp4 (257 aa).

Residues 65–137 (GDNVLGKIVD…EVNQIDLTTK (73 aa)) form the S1 motif domain. In terms of domain architecture, KH spans 147–206 (RGGQLVTITPSKVPRLIGKGGSMINMIKTLTGTRIIVGQNGWVWVSGKNDELERLAIEAI).

Belongs to the RRP4 family. In terms of assembly, component of the archaeal exosome complex. Forms a trimer of Rrp4 and/or Csl4 subunits. The trimer associates with a hexameric ring-like arrangement composed of 3 Rrp41-Rrp42 heterodimers.

It is found in the cytoplasm. Non-catalytic component of the exosome, which is a complex involved in RNA degradation. Increases the RNA binding and the efficiency of RNA degradation. Confers strong poly(A) specificity to the exosome. This Thermococcus kodakarensis (strain ATCC BAA-918 / JCM 12380 / KOD1) (Pyrococcus kodakaraensis (strain KOD1)) protein is Exosome complex component Rrp4.